A 508-amino-acid chain; its full sequence is MNHLWTHLWPGVGSLCLLLAGAAWASLPKPLDPKFESKAALLAARAPEELLCFTERLEDLVCFWEEAASAGVGPDNYSFFYQLEGEPWKTCSLHQAPTTRGAVRFWCSLPTADTSSFVPLELRATAVSSGALLYRRIIHINEVVLLDPPAGLLARRADEGGHVVLRWLPPPGAPVASLIRYEVNISGSVAGGSQKVEILDGRTECVLSNLRGGTRYTFMVRARMAEPSFGGFWSAWSEPASLLTASDLDPLILTLSLILVLILLLLAVLALLSHRRTLKQKIWPGIPSPESEFEGLFTTHKGNFQLWLYQNEGCLWWSPCTPLAEDPPAPLEVLSERCWGAPQAVEPGADDEGPLLEPVGSEHSQDTYLVLDKWLLPRNPSSEDVSQSGGSLDIVAMDKGSEASSCSSGLSLKPGPEGALGASFEYTILDPSSQLLCPRALPPELPPTPPHIKYLYLMVSDSGISTDYSSGGSQGAQGDSLNSPFLNPYENSLIPAPEPSPPGYVACS.

An N-terminal signal peptide occupies residues 1 to 24 (MNHLWTHLWPGVGSLCLLLAGAAW). At 25–250 (ASLPKPLDPK…SLLTASDLDP (226 aa)) the chain is on the extracellular side. Residues cysteine 52 and cysteine 62 are joined by a disulfide bond. Asparagine 76 carries an N-linked (GlcNAc...) asparagine glycan. Cysteine 91 and cysteine 107 form a disulfide bridge. Residues 148 to 247 (PPAGLLARRA…EPASLLTASD (100 aa)) enclose the Fibronectin type-III domain. N-linked (GlcNAc...) asparagine glycosylation occurs at asparagine 184. The WSXWS motif signature appears at 233–237 (WSAWS). A helical transmembrane segment spans residues 251-273 (LILTLSLILVLILLLLAVLALLS). Over 274-508 (HRRTLKQKIW…PSPPGYVACS (235 aa)) the chain is Cytoplasmic. Lysine 281 participates in a covalent cross-link: Glycyl lysine isopeptide (Lys-Gly) (interchain with G-Cter in ubiquitin). A Box 1 motif motif is present at residues 282 to 290 (IWPGIPSPE). A phosphotyrosine; by JAK2 mark is found at tyrosine 368 and tyrosine 426. Residues 452-457 (IKYLYL) carry the ITIM motif motif. Lysine 453 is covalently cross-linked (Glycyl lysine isopeptide (Lys-Gly) (interchain with G-Cter in ubiquitin)). Residues tyrosine 454, tyrosine 456, tyrosine 468, tyrosine 489, and tyrosine 504 each carry the phosphotyrosine; by JAK2 modification. The segment at 467–508 (DYSSGGSQGAQGDSLNSPFLNPYENSLIPAPEPSPPGYVACS) is disordered.

The protein belongs to the type I cytokine receptor family. Type 1 subfamily. As to quaternary structure, forms homodimers on EPO stimulation. The tyrosine-phosphorylated form interacts with several SH2 domain-containing proteins including LYN, the adapter protein SH2B2, PTPN6, PTPN11, JAK2, PI3 kinases, STAT5A/B, SOCS3, CRKL. Interacts with INPP5D/SHIP1. SH2B2 binding inhibits the JAK-STAT signaling. Interacts with RHEX; this interaction occurs in a erythropoietin (EPO)-dependent manner. Interacts with ATXN2L. Post-translationally, on EPO stimulation, phosphorylated on C-terminal tyrosine residues by JAK2. The phosphotyrosine motifs are also recruitment sites for several SH2-containing proteins and adapter proteins which mediate cell proliferation. Phosphorylation on Tyr-454 is required for PTPN6 interaction, Tyr-426 for PTPN11. Tyr-426 is also required for SOCS3 binding, but Tyr-454/Tyr-456 motif is the preferred binding site. In terms of processing, ubiquitinated by the ECS(SOCS2) complex following ligand-binding and phosphorylation by JAK2, leading to its degradation by the proteasome. Regulation by the ECS(SOCS2) complex acts as a negative feedback loop of erythropoietin-mediated signaling pathway. Ubiquitination at Lys-281 mediates receptor internalization, whereas ubiquitination at Lys-453 promotes trafficking of activated receptors to the lysosomes for degradation. Ubiquitinated by NOSIP; appears to be either multi-monoubiquitinated or polyubiquitinated. Ubiquitination mediates proliferation and survival of EPO-dependent cells.

The protein localises to the cell membrane. Its function is as follows. Receptor for erythropoietin, which mediates erythropoietin-induced erythroblast proliferation and differentiation. Upon EPO stimulation, EPOR dimerizes triggering the JAK2/STAT5 signaling cascade. In some cell types, can also activate STAT1 and STAT3. May also activate the LYN tyrosine kinase. In terms of biological role, isoform EPOR-T acts as a dominant-negative receptor of EPOR-mediated signaling. In Canis lupus familiaris (Dog), this protein is Erythropoietin receptor (EPOR).